The primary structure comprises 332 residues: Flotillin-like protein FloA (332 aa).

A helical membrane pass occupies residues 9–29 (FILIGGGIIFVVLFFHYVPFF).

This sequence belongs to the flotillin-like FloA family. As to quaternary structure, homooligomerizes.

Its subcellular location is the cell membrane. It localises to the membrane raft. In terms of biological role, found in functional membrane microdomains (FMM) that may be equivalent to eukaryotic membrane rafts. FMMs are highly dynamic and increase in number as cells age. Flotillins are thought to be important factors in membrane fluidity. The sequence is that of Flotillin-like protein FloA from Phocaeicola vulgatus (strain ATCC 8482 / DSM 1447 / JCM 5826 / CCUG 4940 / NBRC 14291 / NCTC 11154) (Bacteroides vulgatus).